A 1921-amino-acid chain; its full sequence is Endoribonuclease Dicer (1921 aa).

The 177-residue stretch at 51-227 (LLEAALDHNT…ELEEKIKKLE (177 aa)) folds into the Helicase ATP-binding domain. 64-71 (LNTGSGKT) contributes to the ATP binding site. Residues 175 to 178 (DECH) carry the DECH box motif. The tract at residues 409-433 (YVSWSDSEDDDEDEEIEEKEKPETN) is disordered. A compositionally biased stretch (acidic residues) spans 414 to 425 (DSEDDDEDEEIE). The 170-residue stretch at 433-602 (NFPSPFTNIL…SVDTSETETE (170 aa)) folds into the Helicase C-terminal domain. Residues 630 to 722 (AIGHINRYCA…MPVGKETVKY (93 aa)) form the Dicer dsRNA-binding fold domain. Positions 727-746 (DLHDEEETSVPGRPGSTKRR) are disordered. The 148-residue stretch at 895 to 1042 (KFMEDIEKSE…LVPELCAIHP (148 aa)) folds into the PAZ domain. A disordered region spans residues 1270 to 1289 (NLSKDKVDSEKNTSSGYSSK). RNase III domains are found at residues 1277–1404 (DSEK…EETT) and 1665–1823 (FENF…MDSG). 4 residues coordinate Mg(2+): E1317, D1396, E1399, and E1704. A disordered region spans residues 1782 to 1801 (QGMDSELRRSEEDEEKEEDI). 2 residues coordinate Mg(2+): D1809 and E1812. Positions 1848 to 1913 (VPRSPVRELL…ARRALRSLKA (66 aa)) constitute a DRBM domain.

This sequence belongs to the helicase family. Dicer subfamily. Component of the RISC loading complex (RLC), or micro-RNA (miRNA) loading complex (miRLC), which is composed of DICER1, AGO2 and TARBP2; DICER1 and TARBP2 are required to process precursor miRNAs (pre-miRNAs) to mature miRNAs and then load them onto AGO2. Note that the trimeric RLC/miRLC is also referred to as RISC. The cofactor is Mg(2+). Mn(2+) serves as cofactor.

Its subcellular location is the cytoplasm. The enzyme catalyses Endonucleolytic cleavage to 5'-phosphomonoester.. In terms of biological role, double-stranded RNA (dsRNA) endoribonuclease playing a central role in short dsRNA-mediated post-transcriptional gene silencing. Cleaves naturally occurring long dsRNAs and short hairpin pre-microRNAs (miRNA) into fragments of twenty-one to twenty-three nucleotides with 3' overhang of two nucleotides, producing respectively short interfering RNAs (siRNA) and mature microRNAs. SiRNAs and miRNAs serve as guide to direct the RNA-induced silencing complex (RISC) to complementary RNAs to degrade them or prevent their translation. Gene silencing mediated by siRNAs, also called RNA interference, controls the elimination of transcripts from mobile and repetitive DNA elements of the genome but also the degradation of exogenous RNA of viral origin for instance. The miRNA pathway on the other side is a mean to specifically regulate the expression of target genes. The protein is Endoribonuclease Dicer (DICER1) of Gallus gallus (Chicken).